We begin with the raw amino-acid sequence, 420 residues long: Protein disulfide isomerase Creld1 (420 aa).

The first 29 residues, 1-29 (MAPLPPRGLVPSLLWCLSLFLSLPGPVWL), serve as a signal peptide directing secretion. Residues 30 to 362 (QPSPPPHPSP…GFFAEMTEDE (333 aa)) are Extracellular-facing. The CXXC signature appears at 46–49 (CHTC). Disulfide bonds link cysteine 46/cysteine 49, cysteine 155/cysteine 169, cysteine 163/cysteine 181, and cysteine 183/cysteine 192. One can recognise an EGF-like 1 domain in the interval 153–193 (LPCPGGTERPCGGYGQCEGEGTRGGSGHCDCQAGYGGEACG). N-linked (GlcNAc...) asparagine glycosylation is present at asparagine 205. FU repeat units follow at residues 208–255 (HLVC…EQAT) and 268–315 (SYEC…VVCP). A CXXC motif is present at residues 278–281 (CLGC). Disulfide bonds link cysteine 278-cysteine 281, cysteine 309-cysteine 321, cysteine 314-cysteine 330, and cysteine 332-cysteine 343. An EGF-like 2; calcium-binding domain is found at 305–342 (DVDECETVVCPGENEKCENTEGGYRCVCAEGYRQEDGI). Residues 363–383 (MVVLQQMFFGVIICALATLAA) form a helical membrane-spanning segment. A topological domain (cytoplasmic) is located at residue lysine 384. Residues 385–405 (GDLVFTAIFIGAVAAMTGYWL) form a helical membrane-spanning segment. Residues 406 to 420 (SERSDRVLEGFIKGR) lie on the Extracellular side of the membrane.

This sequence belongs to the CRELD family. As to expression, expressed in myoblast C2C12 cells (at protein level).

It localises to the membrane. It carries out the reaction Catalyzes the rearrangement of -S-S- bonds in proteins.. In terms of biological role, protein disulfide isomerase. Promotes the localization of acetylcholine receptors (AChRs) to the plasma membrane. This Mus musculus (Mouse) protein is Protein disulfide isomerase Creld1 (Creld1).